Consider the following 741-residue polypeptide: Protein ACCUMULATION AND REPLICATION OF CHLOROPLASTS 3, chloroplastic (741 aa).

A chloroplast-targeting transit peptide spans 1-41 (MPISMELPVFSTLRVPLFSRLALLPTFGVPFSSLGATTRLN). 2 disordered regions span residues 444–465 (ENGD…SRLD) and 539–558 (DSRE…SSDT). Positions 451–465 (YPLKEGEPSRNSRLD) are enriched in basic and acidic residues. Residues 546-558 (FNPNGSTKDSSDT) show a composition bias toward polar residues. MORN repeat units lie at residues 612 to 628 (QGGL…GDGS), 630 to 652 (YDGM…NGDV), and 653 to 675 (FQGT…KGDR).

In terms of assembly, self-interacts. Interacts with FTSZ, CDP1/PARC6 (via N-terminus), MIND1 and MINE1. Part of a complex made of ARC3, ARC6, FTSZ1 and FTSZ2. Recruited to the middle of the plastid by CDP1/PARC6 where subsequent complex made of CDP1/PARC6, ARC3 and FtsZ proteins can form; this complex enhances the dynamics of Z rings during chloroplast division. Binding to FTSZ2-1 is enabled by ARC6.

It is found in the plastid. Its subcellular location is the chloroplast outer membrane. It localises to the chloroplast stroma. In terms of biological role, together with MIND1 and MCD1, regulates FtsZ ring positioning in chloroplasts in an ARC6-dependent manner. Z-ring accessory protein involved in the initiation of plastid division and division site placement (might functionally replace bacterial MinC). Acts as a disassembly factor that accelerates fragmentation and depolymerization of existing FtsZ2 filaments by enhancing FTSZ2 GTPase activity, thus leading to the conversion of FTSZ2 bound GTP into GDP, a process which triggers FtsZ2 filaments destabilization. Prevents misplaced Z-ring formation at chloroplast stroma nondivision sites. May control the rate of chloroplast expansion. Seems to influence stromule (stroma-filled tubular extensions of the plastid envelope membrane) length and frequency. The protein is Protein ACCUMULATION AND REPLICATION OF CHLOROPLASTS 3, chloroplastic of Arabidopsis thaliana (Mouse-ear cress).